The sequence spans 256 residues: 1-(5-phosphoribosyl)-5-[(5-phosphoribosylamino)methylideneamino] imidazole-4-carboxamide isomerase (256 aa).

The Proton acceptor role is filled by D8. D129 serves as the catalytic Proton donor.

The protein belongs to the HisA/HisF family.

It localises to the cytoplasm. It catalyses the reaction 1-(5-phospho-beta-D-ribosyl)-5-[(5-phospho-beta-D-ribosylamino)methylideneamino]imidazole-4-carboxamide = 5-[(5-phospho-1-deoxy-D-ribulos-1-ylimino)methylamino]-1-(5-phospho-beta-D-ribosyl)imidazole-4-carboxamide. It functions in the pathway amino-acid biosynthesis; L-histidine biosynthesis; L-histidine from 5-phospho-alpha-D-ribose 1-diphosphate: step 4/9. This chain is 1-(5-phosphoribosyl)-5-[(5-phosphoribosylamino)methylideneamino] imidazole-4-carboxamide isomerase, found in Synechococcus elongatus (strain ATCC 33912 / PCC 7942 / FACHB-805) (Anacystis nidulans R2).